The primary structure comprises 286 residues: ATP synthase gamma chain (286 aa).

It belongs to the ATPase gamma chain family. F-type ATPases have 2 components, CF(1) - the catalytic core - and CF(0) - the membrane proton channel. CF(1) has five subunits: alpha(3), beta(3), gamma(1), delta(1), epsilon(1). CF(0) has three main subunits: a, b and c.

The protein localises to the cell inner membrane. Produces ATP from ADP in the presence of a proton gradient across the membrane. The gamma chain is believed to be important in regulating ATPase activity and the flow of protons through the CF(0) complex. This Marinomonas sp. (strain MWYL1) protein is ATP synthase gamma chain.